The primary structure comprises 500 residues: Farnesylcysteine lyase (500 aa).

The N-terminal stretch at 1–24 (MKDFPIAISLLFALLSPVLLPCSG) is a signal peptide. N-linked (GlcNAc...) asparagine glycans are attached at residues N56, N113, N211, and N281.

It belongs to the prenylcysteine oxidase family. Requires FAD as cofactor. As to expression, expressed in seedilings, flowers, stems, leaves and roots.

Its subcellular location is the lysosome. The enzyme catalyses S-(2E,6E)-farnesyl-L-cysteine + O2 + H2O = (2E,6E)-farnesal + L-cysteine + H2O2. In terms of biological role, involved in the degradation of prenylcysteine. Cleaves specifically the thioether bond of S-farnesyl-L-cysteine and has no activity with S-geranylgeranyl-L-cysteine. Also recognizes N-acetyl-farnesylcysteine and may have a role in deprenylation of farnesylated proteins. In Arabidopsis thaliana (Mouse-ear cress), this protein is Farnesylcysteine lyase.